The chain runs to 206 residues: Large ribosomal subunit protein uL4 (206 aa).

The disordered stretch occupies residues Gly-47 to Gln-75.

This sequence belongs to the universal ribosomal protein uL4 family. In terms of assembly, part of the 50S ribosomal subunit.

Its function is as follows. One of the primary rRNA binding proteins, this protein initially binds near the 5'-end of the 23S rRNA. It is important during the early stages of 50S assembly. It makes multiple contacts with different domains of the 23S rRNA in the assembled 50S subunit and ribosome. Forms part of the polypeptide exit tunnel. The sequence is that of Large ribosomal subunit protein uL4 from Clostridium botulinum (strain ATCC 19397 / Type A).